Here is a 353-residue protein sequence, read N- to C-terminus: Ferredoxin--NADP reductase (353 aa).

FAD is bound by residues threonine 25, glutamate 44, glutamine 52, tyrosine 57, valine 97, phenylalanine 132, aspartate 298, and serine 339.

It belongs to the ferredoxin--NADP reductase type 2 family. In terms of assembly, homodimer. Requires FAD as cofactor.

The enzyme catalyses 2 reduced [2Fe-2S]-[ferredoxin] + NADP(+) + H(+) = 2 oxidized [2Fe-2S]-[ferredoxin] + NADPH. This Chlorobium chlorochromatii (strain CaD3) protein is Ferredoxin--NADP reductase.